Here is a 485-residue protein sequence, read N- to C-terminus: Glucose-6-phosphate 1-dehydrogenase (485 aa).

NADP(+) contacts are provided by residues Arg-46, 89-90, and Lys-144; that span reads DI. Substrate contacts are provided by His-174, Lys-178, Glu-212, and Asp-231. His-236 acts as the Proton acceptor in catalysis. Lys-334 contributes to the substrate binding site.

It belongs to the glucose-6-phosphate dehydrogenase family.

The enzyme catalyses D-glucose 6-phosphate + NADP(+) = 6-phospho-D-glucono-1,5-lactone + NADPH + H(+). It participates in carbohydrate degradation; pentose phosphate pathway; D-ribulose 5-phosphate from D-glucose 6-phosphate (oxidative stage): step 1/3. In terms of biological role, catalyzes the oxidation of glucose 6-phosphate to 6-phosphogluconolactone. This Zymomonas mobilis subsp. mobilis (strain ATCC 31821 / ZM4 / CP4) protein is Glucose-6-phosphate 1-dehydrogenase.